The primary structure comprises 1113 residues: Lon protease homolog, mitochondrial (1113 aa).

A mitochondrion-targeting transit peptide spans 1–61 (MLRGQTLPWR…RAFSSSSIRR (61 aa)). The disordered stretch occupies residues 42-196 (SRLHRSLPTS…SGEKALQKPS (155 aa)). Composition is skewed to basic and acidic residues over residues 64-99 (KPPP…RKAA), 124-143 (KAGA…KDGN), and 178-192 (DGGK…EKAL). Residues 204–456 (VMAIPIAKRP…KALVVLKKEL (253 aa)) form the Lon N-terminal domain. Residue 609–616 (GPPGVGKT) participates in ATP binding. Residues 828 to 858 (LTDEGKAVQEESQKETESPDSKSPVDPEKST) show a composition bias toward basic and acidic residues. Residues 828–864 (LTDEGKAVQEESQKETESPDSKSPVDPEKSTTETPRV) are disordered. Residues 898 to 1084 (TFPPGVTMGL…SEVFDLLFTD (187 aa)) form the Lon proteolytic domain. Catalysis depends on residues S990 and K1033.

It belongs to the peptidase S16 family. Homohexamer or homoheptamer. Organized in a ring with a central cavity.

Its subcellular location is the mitochondrion matrix. It carries out the reaction Hydrolysis of proteins in presence of ATP.. Functionally, ATP-dependent serine protease that mediates the selective degradation of misfolded, unassembled or oxidatively damaged polypeptides as well as certain short-lived regulatory proteins in the mitochondrial matrix. May also have a chaperone function in the assembly of inner membrane protein complexes. Participates in the regulation of mitochondrial gene expression and in the maintenance of the integrity of the mitochondrial genome. Binds to mitochondrial DNA in a site-specific manner. In Aspergillus niger (strain ATCC MYA-4892 / CBS 513.88 / FGSC A1513), this protein is Lon protease homolog, mitochondrial (pim1).